Here is a 237-residue protein sequence, read N- to C-terminus: Orotidine 5'-phosphate decarboxylase (237 aa).

Residues D17, K39, 66–75 (DLKLHDIGNT), T121, R182, Q191, G211, and R212 contribute to the substrate site. K68 (proton donor) is an active-site residue.

The protein belongs to the OMP decarboxylase family. Type 1 subfamily. Homodimer.

It catalyses the reaction orotidine 5'-phosphate + H(+) = UMP + CO2. It participates in pyrimidine metabolism; UMP biosynthesis via de novo pathway; UMP from orotate: step 2/2. Functionally, catalyzes the decarboxylation of orotidine 5'-monophosphate (OMP) to uridine 5'-monophosphate (UMP). The protein is Orotidine 5'-phosphate decarboxylase of Bradyrhizobium diazoefficiens (strain JCM 10833 / BCRC 13528 / IAM 13628 / NBRC 14792 / USDA 110).